We begin with the raw amino-acid sequence, 95 residues long: RING finger protein Z (95 aa).

Positions 1 to 17 are enriched in polar residues; sequence MGNCNRTQKPSSSSNNL. The tract at residues 1–25 is disordered; that stretch reads MGNCNRTQKPSSSSNNLEKPPQAAE. The N-myristoyl glycine; by host moiety is linked to residue Gly-2. The RING-type; atypical zinc-finger motif lies at 40 to 76; that stretch reads CKCCWFADKNLITCSDHYLCLRCHQIMLRNSELCNIC. Positions 90-93 match the ASAP motif motif; it reads ASAP.

It belongs to the arenaviridae Z protein family. As to quaternary structure, interacts with protein NP; this interaction probably directs the encapsidated genome to budding sites. Interacts (via RING domain) with polymerase L; this interaction inhibits viral transcription and replication, Z partially blocks the product exit tunnel for the releasing nascent RNA product. Interacts with the glycoprotein complex; this interaction plays a role in virion budding. Interacts with host eIF4E; this interaction results in eIF4E reduced affinity for its substrate, the 5'-m7 G cap structure. Interacts (via late-budding domain) with host TSG101; this interaction is essential for budding and release of viral particles. Interacts with host RPLP0; this interaction may serve to load ribosome-like particles inside the virion. Interacts with host PML; this interaction induces PML bodies redistribution in the cytoplasm upon viral infection. In terms of processing, myristoylation is required for the role of RING finger protein Z in assembly and budding.

It localises to the virion. Its subcellular location is the host cytoplasm. The protein localises to the host perinuclear region. The protein resides in the host cell membrane. Plays a crucial role in virion assembly and budding. Expressed late in the virus life cycle, it acts as an inhibitor of viral transcription and RNA synthesis by interacting with the viral polymerase L. Presumably recruits the NP encapsidated genome to cellular membranes at budding sites via direct interaction with NP. Plays critical roles in the final steps of viral release by interacting with host TSG101, a member of the vacuolar protein-sorting pathway and using other cellular host proteins involved in vesicle formation pathway. The budding of the virus progeny occurs after association of protein Z with the viral glycoprotein complex SSP-GP1-GP2 at the cell periphery, step that requires myristoylation of protein Z. Also selectively represses protein production by associating with host eIF4E. In cell-based minigenome assay, has an inhibitory effect on the ribonucleoprotein machinery (vRNP), which is responsible for the replication and transcription of the viral genome. The sequence is that of RING finger protein Z from Tacaribe virus (strain Franze-Fernandez) (TCRV).